Here is a 475-residue protein sequence, read N- to C-terminus: Ankyrin repeat, SAM and basic leucine zipper domain-containing protein 1 (475 aa).

Phosphoserine occurs at positions 17, 18, and 20. 6 ANK repeats span residues 45-74 (EKNE…SVDT), 78-107 (YGWT…NASF), 110-144 (DKQT…DPNM), 148-177 (RLMT…DVNA), 181-210 (NGYT…NKMI), and 214-243 (DGKT…PLEG). Positions 272 to 334 (SYTAFGDLEI…KILAALKELE (63 aa)) constitute an SAM domain.

As to quaternary structure, interacts with DDX4, PIWIL1, RANBP9 and TDRD1.

Its subcellular location is the cytoplasm. In terms of biological role, plays a central role during spermatogenesis by repressing transposable elements and preventing their mobilization, which is essential for the germline integrity. Acts via the piRNA metabolic process, which mediates the repression of transposable elements during meiosis by forming complexes composed of piRNAs and Piwi proteins and governs the methylation and subsequent repression of transposons. Its association with pi-bodies suggests a participation in the primary piRNAs metabolic process. Required prior to the pachytene stage to facilitate the production of multiple types of piRNAs, including those associated with repeats involved in the regulation of retrotransposons. May act by mediating protein-protein interactions during germ cell maturation. This chain is Ankyrin repeat, SAM and basic leucine zipper domain-containing protein 1 (ASZ1), found in Atelerix albiventris (Middle-African hedgehog).